The following is a 203-amino-acid chain: Holliday junction branch migration complex subunit RuvA (203 aa).

The segment at 1-61 (MIIYKYGKIM…EYTKVTYGFD (61 aa)) is domain I. The domain II stretch occupies residues 62-139 (NFKELVIFED…KFMKKLTSDE (78 aa)). The tract at residues 140–147 (AAKIKVPA) is flexible linker. A domain III region spans residues 147-203 (ASSENENKFLDTMKMLGFKQQQIKFALDKIELNDDIETCVENAIKLISQQQHETSRV).

It belongs to the RuvA family. Homotetramer. Forms an RuvA(8)-RuvB(12)-Holliday junction (HJ) complex. HJ DNA is sandwiched between 2 RuvA tetramers; dsDNA enters through RuvA and exits via RuvB. An RuvB hexamer assembles on each DNA strand where it exits the tetramer. Each RuvB hexamer is contacted by two RuvA subunits (via domain III) on 2 adjacent RuvB subunits; this complex drives branch migration. In the full resolvosome a probable DNA-RuvA(4)-RuvB(12)-RuvC(2) complex forms which resolves the HJ.

The protein localises to the cytoplasm. Its function is as follows. The RuvA-RuvB-RuvC complex processes Holliday junction (HJ) DNA during genetic recombination and DNA repair, while the RuvA-RuvB complex plays an important role in the rescue of blocked DNA replication forks via replication fork reversal (RFR). RuvA specifically binds to HJ cruciform DNA, conferring on it an open structure. The RuvB hexamer acts as an ATP-dependent pump, pulling dsDNA into and through the RuvAB complex. HJ branch migration allows RuvC to scan DNA until it finds its consensus sequence, where it cleaves and resolves the cruciform DNA. The sequence is that of Holliday junction branch migration complex subunit RuvA from Metamycoplasma arthritidis (strain 158L3-1) (Mycoplasma arthritidis).